Consider the following 751-residue polypeptide: ATP-dependent DNA helicase Hel308 (751 aa).

ATP contacts are provided by residues Q20 and 39–46; that span reads IPTASGKT. Positions 26–196 constitute a Helicase ATP-binding domain; it reads EGLLDKSKNF…WLNAKLVTDE (171 aa). The DEAH box motif lies at 143 to 146; the sequence is DEIH. In terms of domain architecture, Helicase C-terminal spans 235–435; that stretch reads NLTDLIVDSV…VLRVHILGLI (201 aa).

This sequence belongs to the helicase family. Hel308 subfamily. In terms of assembly, monomer.

The catalysed reaction is Couples ATP hydrolysis with the unwinding of duplex DNA by translocating in the 3'-5' direction.. The enzyme catalyses ATP + H2O = ADP + phosphate + H(+). Functionally, DNA-dependent ATPase and 3'-5' DNA helicase that may be involved in repair of stalled replication forks. This chain is ATP-dependent DNA helicase Hel308, found in Methanococcus vannielii (strain ATCC 35089 / DSM 1224 / JCM 13029 / OCM 148 / SB).